A 284-amino-acid chain; its full sequence is 3-oxoadipate:acetyl-CoA acetyltransferase (284 aa).

3 residues coordinate Zn(2+): His-47, His-49, and Glu-229.

Belongs to the BKACE family. The cofactor is Zn(2+).

It catalyses the reaction 3-oxoadipate + acetyl-CoA = acetoacetate + succinyl-CoA. In terms of biological role, catalyzes the condensation of 3-oxoadipate (beta-ketoadipate) and acetyl-CoA, forming acetoacetate and succinyl-CoA. Is likely involved is the degradation of 3-oxoadipate through an alternative pathway, within catechol degradation. In Cupriavidus necator (strain ATCC 17699 / DSM 428 / KCTC 22496 / NCIMB 10442 / H16 / Stanier 337) (Ralstonia eutropha), this protein is 3-oxoadipate:acetyl-CoA acetyltransferase.